The primary structure comprises 504 residues: MFS antiporter QDR2 (504 aa).

Positions 1–14 (MLSTTQSVTEPTEV) are enriched in polar residues. The disordered stretch occupies residues 1–23 (MLSTTQSVTEPTEVTSKKVEDIE). At 1-41 (MLSTTQSVTEPTEVTSKKVEDIEKENDEETPYSIFTSYDRL) the chain is on the cytoplasmic side. The helical transmembrane segment at 42–62 (VLIVILSLIGFWSTISSPIYF) threads the bilayer. Residues 63 to 75 (PALPTLTSYFHTS) are Extracellular-facing. A helical membrane pass occupies residues 76–96 (SSIMNISVVAYLIFQGIAPTI). Over 97–106 (SSNLADTFGR) the chain is Cytoplasmic. A helical membrane pass occupies residues 107-129 (RPVILASIIVFCASCVAISQTNV). Residues 130 to 132 (YWL) are Extracellular-facing. Residues 133 to 155 (LAVLRCIQAAGIAAVISISSGVA) traverse the membrane as a helical segment. Over 156–169 (GDVCTRANRGSMVG) the chain is Cytoplasmic. Residues 170–190 (AVAGLQLVGNGIGGLVGAALI) form a helical membrane-spanning segment. Over 191–198 (SSFNSWRS) the chain is Extracellular. The helical transmembrane segment at 199–219 (IFIFLTIGGGVTFILAIFILP) threads the bilayer. At 220–278 (ETSRKLVGNGSVVPKNILNKSPYIYLPHFKKRMNNDITTIVPATRFDLLGPLKIFFQKN) the chain is on the cytoplasmic side. The chain crosses the membrane as a helical span at residues 279-299 (VFCTLLPVGIHFAAWTMVLTS). Residues 300–311 (LSTELESRYHYS) lie on the Extracellular side of the membrane. A helical membrane pass occupies residues 312–332 (VMHVGLIYLPQGIACIAGSLV). Residues 333–370 (VGKSLDWYYRYRKTIYDQEVECLPLDERPQFNIVATRL) are Cytoplasmic-facing. Residues 371 to 391 (TLSVVPALLMIIGLVIFGWCI) form a helical membrane-spanning segment. At 392–396 (QYKRH) the chain is on the extracellular side. Residues 397 to 417 (IISIIISTILVSFSASVFIAI) traverse the membrane as a helical segment. Over 418-438 (CTTMLVDLYPNNGSGSTSCLN) the chain is Cytoplasmic. Residues 439 to 456 (LMRCWLAALGAGVLDSMI) form a helical membrane-spanning segment. Residues 457–460 (NAMN) are Extracellular-facing. A helical membrane pass occupies residues 461 to 483 (VGGTYTVVAGFCILFDLALIYVL). Topologically, residues 484 to 504 (HNAKKKFSNSGPTTTKSPPKQ) are cytoplasmic.

This sequence belongs to the major facilitator superfamily. CAR1 family.

It localises to the cell membrane. Its function is as follows. MFS antiporter that does not display functional linkage as drug transporter and performs functions that significantly affect biofilm development and virulence. No substrate for transport has been identified yet, but plays an important role in the growth in the host. The sequence is that of MFS antiporter QDR2 (QDR2) from Candida albicans (strain SC5314 / ATCC MYA-2876) (Yeast).